The following is a 367-amino-acid chain: Protein valois (367 aa).

3 WD repeats span residues 101–139, 152–192, and 198–238; these read QAEH…RDSQ, AHPT…MVST, and SHTD…PSST. The tract at residues 309-367 is interaction with csul; it reads LAAMSNLPASVKVANVQAGHEFIYTHQDTHSRLTDAVWTDDSTLITIGHGRKMVTHAIK.

In terms of assembly, interacts with csul and tud. In terms of tissue distribution, in oocytes, localizes to pole plasm and nuage (at protein level). Expressed stronger in the germline than in somatic cells. In the germarium it sometimes concentrates in perinuclear aggregates that disappear by stage 2 of oogenesis. At later stages, it is uniformly distributed in the nurse cells and oocyte, as well as in young embryos, with no particular enrichment at the posterior or inside the pole cells (at protein level).

The protein resides in the cytoplasm. In terms of biological role, involved in specific localization of cytoplasmic proteins during the formation of pole plasm. Required for synthesis and/or stability of oskar protein (osk) and localization of tudor (tud) in both the nuage and posterior pole of the oocyte. Required for normal posterior localization of osk in later stages of oogenesis and for posterior localization of the vasa (vas) protein during the entire process of pole plasm assembly. May act by regulating the complex that contains the arginine N-methyltransferase csul. This is Protein valois (vls) from Drosophila melanogaster (Fruit fly).